Reading from the N-terminus, the 323-residue chain is tRNA-dihydrouridine(20/20a) synthase (323 aa).

Residues Pro-14–Leu-16 and Gln-66 each bind FMN. Cys-96 functions as the Proton donor in the catalytic mechanism. Residues Lys-135, His-166, Asn-206–Gly-208, and Gly-228–Arg-229 each bind FMN.

This sequence belongs to the Dus family. DusA subfamily. FMN is required as a cofactor.

It carries out the reaction 5,6-dihydrouridine(20) in tRNA + NADP(+) = uridine(20) in tRNA + NADPH + H(+). It catalyses the reaction 5,6-dihydrouridine(20) in tRNA + NAD(+) = uridine(20) in tRNA + NADH + H(+). The enzyme catalyses 5,6-dihydrouridine(20a) in tRNA + NADP(+) = uridine(20a) in tRNA + NADPH + H(+). The catalysed reaction is 5,6-dihydrouridine(20a) in tRNA + NAD(+) = uridine(20a) in tRNA + NADH + H(+). Its function is as follows. Catalyzes the synthesis of 5,6-dihydrouridine (D), a modified base found in the D-loop of most tRNAs, via the reduction of the C5-C6 double bond in target uridines. Specifically modifies U20 and U20a in tRNAs. In Haemophilus ducreyi (strain 35000HP / ATCC 700724), this protein is tRNA-dihydrouridine(20/20a) synthase.